Here is a 394-residue protein sequence, read N- to C-terminus: Phosphoglycerate kinase (394 aa).

Substrate is bound by residues aspartate 21–asparagine 23, arginine 37, histidine 60–arginine 63, arginine 119, and arginine 152. Residues lysine 202, glycine 293, glutamate 324, and glycine 350–serine 353 contribute to the ATP site.

The protein belongs to the phosphoglycerate kinase family. Monomer.

Its subcellular location is the cytoplasm. It catalyses the reaction (2R)-3-phosphoglycerate + ATP = (2R)-3-phospho-glyceroyl phosphate + ADP. It participates in carbohydrate degradation; glycolysis; pyruvate from D-glyceraldehyde 3-phosphate: step 2/5. The chain is Phosphoglycerate kinase from Caldanaerobacter subterraneus subsp. tengcongensis (strain DSM 15242 / JCM 11007 / NBRC 100824 / MB4) (Thermoanaerobacter tengcongensis).